Here is a 1067-residue protein sequence, read N- to C-terminus: Ubiquitin conjugation factor E4 A (1067 aa).

The interval 33 to 57 is disordered; the sequence is KEQLKQQSDELPASPDDSDNSVSES. Lys-386 carries the N6-acetyllysine modification. Residues 987–1061 enclose the U-box domain; sequence DACDEFLDPI…QRWLAERKQQ (75 aa).

This sequence belongs to the ubiquitin conjugation factor E4 family.

The protein resides in the cytoplasm. It carries out the reaction S-ubiquitinyl-[E2 ubiquitin-conjugating enzyme]-L-cysteine + [acceptor protein]-L-lysine = [E2 ubiquitin-conjugating enzyme]-L-cysteine + N(6)-ubiquitinyl-[acceptor protein]-L-lysine.. It functions in the pathway protein modification; protein ubiquitination. Ubiquitin-protein ligase that probably functions as an E3 ligase in conjunction with specific E1 and E2 ligases. May also function as an E4 ligase mediating the assembly of polyubiquitin chains on substrates ubiquitinated by another E3 ubiquitin ligase. Mediates 'Lys-48'-linked polyubiquitination of substrates. This is Ubiquitin conjugation factor E4 A from Bos taurus (Bovine).